Here is a 359-residue protein sequence, read N- to C-terminus: Dual-specificity RNA methyltransferase RlmN (359 aa).

Residue Glu98 is the Proton acceptor of the active site. Residues 104–329 (EPKRGTLCIS…LEHGLTATIR (226 aa)) enclose the Radical SAM core domain. Cys111 and Cys340 are oxidised to a cystine. [4Fe-4S] cluster is bound by residues Cys118, Cys122, and Cys125. Residues 166–167 (GE), Ser198, 220–222 (SLH), and Asn297 each bind S-adenosyl-L-methionine. Residue Cys340 is the S-methylcysteine intermediate of the active site.

It belongs to the radical SAM superfamily. RlmN family. The cofactor is [4Fe-4S] cluster.

It is found in the cytoplasm. It catalyses the reaction adenosine(2503) in 23S rRNA + 2 reduced [2Fe-2S]-[ferredoxin] + 2 S-adenosyl-L-methionine = 2-methyladenosine(2503) in 23S rRNA + 5'-deoxyadenosine + L-methionine + 2 oxidized [2Fe-2S]-[ferredoxin] + S-adenosyl-L-homocysteine. It carries out the reaction adenosine(37) in tRNA + 2 reduced [2Fe-2S]-[ferredoxin] + 2 S-adenosyl-L-methionine = 2-methyladenosine(37) in tRNA + 5'-deoxyadenosine + L-methionine + 2 oxidized [2Fe-2S]-[ferredoxin] + S-adenosyl-L-homocysteine. Its function is as follows. Specifically methylates position 2 of adenine 2503 in 23S rRNA and position 2 of adenine 37 in tRNAs. m2A2503 modification seems to play a crucial role in the proofreading step occurring at the peptidyl transferase center and thus would serve to optimize ribosomal fidelity. This Halorhodospira halophila (strain DSM 244 / SL1) (Ectothiorhodospira halophila (strain DSM 244 / SL1)) protein is Dual-specificity RNA methyltransferase RlmN.